Consider the following 329-residue polypeptide: Homeobox protein Nkx-3.2 (329 aa).

Positions glycine 107–proline 188 are disordered. The span at serine 110–proline 124 shows a compositional bias: gly residues. Residues glutamate 138 to glycine 160 are compositionally biased toward basic and acidic residues. The segment at residues lysine 202 to glutamine 261 is a DNA-binding region (homeobox).

This sequence belongs to the NK-3 homeobox family. First expressed in developing facial cartilage in early tailbud embryos, with expression localized to the basihyobranchial, palatoquadrate and possibly Meckel's cartilages. Shortly after, a second area of expression is seen in the musculature of the anterior gut. During late embryogenesis, gut expression extends into hindgut tissues. In adults, expressed at a high level in the kidney, pancreas, spleen and stomach and at a slightly lower level in the intestine, skeletal muscle and tongue. Adult heart, liver and lung show little or no expression.

It is found in the nucleus. The chain is Homeobox protein Nkx-3.2 (nkx3-2) from Xenopus laevis (African clawed frog).